Consider the following 146-residue polypeptide: Cytidine deaminase (146 aa).

The CMP/dCMP-type deaminase domain occupies 13 to 140 (EHVQRLLLSS…ELLPASFGPE (128 aa)). 54–56 (NIE) is a binding site for substrate. C65 serves as a coordination point for Zn(2+). The active-site Proton donor is E67. Residues C99 and C102 each contribute to the Zn(2+) site.

The protein belongs to the cytidine and deoxycytidylate deaminase family. Homotetramer. Zn(2+) is required as a cofactor.

It catalyses the reaction cytidine + H2O + H(+) = uridine + NH4(+). The catalysed reaction is 2'-deoxycytidine + H2O + H(+) = 2'-deoxyuridine + NH4(+). Functionally, this enzyme scavenges exogenous and endogenous cytidine and 2'-deoxycytidine for UMP synthesis. This is Cytidine deaminase (Cda) from Mus musculus (Mouse).